Reading from the N-terminus, the 345-residue chain is Annexin A9 (345 aa).

4 Annexin repeats span residues 41–112, 113–184, 197–266, and 270–341; these read FSAD…ALLQ, PAAH…ALAK, NLAA…NLAS, and NTPL…ALCR.

This sequence belongs to the annexin family. As to quaternary structure, homodimer.

In terms of biological role, may act as a low affinity receptor for acetylcholine. This chain is Annexin A9 (ANXA9), found in Bos taurus (Bovine).